The chain runs to 473 residues: 3-isopropylmalate dehydratase large subunit (473 aa).

Positions 355, 415, and 418 each coordinate [4Fe-4S] cluster. A disordered region spans residues 423 to 452; it reads PDQLAPGERSASTSNRNFEGRQGKGGRTHL.

The protein belongs to the aconitase/IPM isomerase family. LeuC type 1 subfamily. As to quaternary structure, heterodimer of LeuC and LeuD. [4Fe-4S] cluster serves as cofactor.

The enzyme catalyses (2R,3S)-3-isopropylmalate = (2S)-2-isopropylmalate. The protein operates within amino-acid biosynthesis; L-leucine biosynthesis; L-leucine from 3-methyl-2-oxobutanoate: step 2/4. Its function is as follows. Catalyzes the isomerization between 2-isopropylmalate and 3-isopropylmalate, via the formation of 2-isopropylmaleate. The polypeptide is 3-isopropylmalate dehydratase large subunit (Corynebacterium jeikeium (strain K411)).